A 54-amino-acid chain; its full sequence is Small, acid-soluble spore protein gamma-type (54 aa).

Positions 1–54 (MAKKNRNKQQQEMQQQQQQHQAEFANEFAEGSSAEQARQQQQKAAGKRQKKNQQ) are disordered. Low complexity-rich tracts occupy residues 10 to 21 (QQEMQQQQQQHQ) and 29 to 44 (AEGSSAEQARQQQQKA). Over residues 45 to 54 (AGKRQKKNQQ) the composition is skewed to basic residues.

This sequence belongs to the gamma-type SASP family.

Functionally, SASP are proteins degraded in the first minutes of spore germination and provide amino acids for both new protein synthesis and metabolism. These proteins may be involved in dormant spore's high resistance to UV light. In Alkalihalophilus pseudofirmus (strain ATCC BAA-2126 / JCM 17055 / OF4) (Bacillus pseudofirmus), this protein is Small, acid-soluble spore protein gamma-type (sspA).